We begin with the raw amino-acid sequence, 190 residues long: MELVVGRVAKSHGIKGELVVEVRTDEPEDRFAVGSVLRGRKPRESTLKSYTVEAARDHSGRLLLRLEGVSDRGDADALRGTLFVIDSSELEPSDDPDEFYDHELEGLKVVLTDGTEVGSVIEVLHSAAGELLSIRRTGETSGELLIPFVAAIVTSVSIADGVVMIEPPEGLLDPDFGDKSNSDNSNSDND.

The PRC barrel domain maps to 95-171; sequence DPDEFYDHEL…VVMIEPPEGL (77 aa). A disordered region spans residues 169-190; the sequence is EGLLDPDFGDKSNSDNSNSDND.

Belongs to the RimM family. As to quaternary structure, binds ribosomal protein uS19.

The protein localises to the cytoplasm. An accessory protein needed during the final step in the assembly of 30S ribosomal subunit, possibly for assembly of the head region. Essential for efficient processing of 16S rRNA. May be needed both before and after RbfA during the maturation of 16S rRNA. It has affinity for free ribosomal 30S subunits but not for 70S ribosomes. In Rhodococcus erythropolis (strain PR4 / NBRC 100887), this protein is Ribosome maturation factor RimM.